We begin with the raw amino-acid sequence, 262 residues long: ClpXP adapter protein SpxH (262 aa).

This sequence belongs to the SpxH family. As to quaternary structure, interacts with Spx.

It localises to the cytoplasm. Its function is as follows. Adapter protein required for efficient degradation of Spx by ClpXP under non-stress conditions. Interaction with Spx stabilizes Spx and exposes the C-terminus of Spx for recognition and proteolysis by ClpXP. The chain is ClpXP adapter protein SpxH from Staphylococcus saprophyticus subsp. saprophyticus (strain ATCC 15305 / DSM 20229 / NCIMB 8711 / NCTC 7292 / S-41).